A 438-amino-acid chain; its full sequence is Polycomb protein eed-B (438 aa).

The segment at 1-70 (MSEASGRAAG…GRKGWGKGKW (70 aa)) is disordered. Residues 40–57 (SIESGTNTERPDTPTNAA) are compositionally biased toward polar residues. 7 WD repeats span residues 88 to 131 (DHNQ…DIRL), 139 to 182 (DADE…CIKH), 185 to 225 (GHGN…LVAI), 231 to 270 (GHRD…MKTA), 301 to 338 (IHRN…DDIE), 356 to 396 (SQCD…PHKA), and 405 to 438 (KCAS…DRLR).

Belongs to the WD repeat ESC family. In terms of assembly, component of the prc2/eed-ezh2 complex. Can interact with ezh2, hdac1 and taf9. Interacts with yy1.

It localises to the nucleus. Polycomb group (PcG) protein. Component of the prc2/eed-ezh2 complex, which methylates 'Lys-9' and 'Lys-27' of histone H3, leading to transcriptional repression of the affected target gene. May play a role in neural induction. The protein is Polycomb protein eed-B (eed-b) of Xenopus laevis (African clawed frog).